The primary structure comprises 616 residues: E3 ubiquitin-protein ligase DTX4 (616 aa).

2 WWE domains span residues 1–78 (MLLA…PVRR) and 79–155 (NYYD…RVRR). 2 disordered regions span residues 223–254 (VGKL…PSQV) and 355–387 (PPPV…GKTP). Basic residues predominate over residues 375–384 (KTTKKQAKKG). The RING-type; atypical zinc finger occupies 406-465 (CTICMERLTAPSGYKGPQPTVKPDLVGKLSRCGHIYHIYCLVAMYNNGNKDGSLQCPTCK).

Belongs to the Deltex family. Interacts with NLRP4. As to expression, expressed in brain, testis, embryonic fibroblasts and thymocytes.

Its subcellular location is the cytoplasm. The enzyme catalyses S-ubiquitinyl-[E2 ubiquitin-conjugating enzyme]-L-cysteine + [acceptor protein]-L-lysine = [E2 ubiquitin-conjugating enzyme]-L-cysteine + N(6)-ubiquitinyl-[acceptor protein]-L-lysine.. It functions in the pathway protein modification; protein ubiquitination. In terms of biological role, functions as a ubiquitin ligase protein in vivo, mediating 'Lys48'-linked polyubiquitination and promoting degradation of TBK1, targeting to TBK1 requires interaction with NLRP4. Regulator of Notch signaling, a signaling pathway involved in cell-cell communications that regulates a broad spectrum of cell-fate determinations. This chain is E3 ubiquitin-protein ligase DTX4 (Dtx4), found in Mus musculus (Mouse).